Consider the following 3373-residue polypeptide: Intermembrane lipid transfer protein vps13A (3373 aa).

The Chorein N-terminal domain maps to 3–119 (FEGLVSDVLS…QAELKKKKLE (117 aa)). Disordered stretches follow at residues 818–858 (PKAT…VNSS), 1028–1096 (VPIN…KTAS), 1259–1304 (NNNK…DLEK), 1648–1729 (DPSI…EEEK), and 1872–1913 (QKKR…GKKD). The segment covering 823-839 (TPINDSNSPSSVSPKLI) has biased composition (polar residues). Composition is skewed to low complexity over residues 840 to 858 (STSP…VNSS) and 1048 to 1066 (SSPN…QSPQ). 2 stretches are compositionally biased toward basic and acidic residues: residues 1263–1274 (SIEKSKSIDSKL) and 1288–1304 (RSDD…DLEK). Low complexity-rich tracts occupy residues 1659–1685 (QQQQ…RSQS), 1695–1716 (SSIG…SLSS), and 1884–1898 (SSST…STNS). Polar residues predominate over residues 1899 to 1909 (FQTSTSGNSNS). Positions 2405 to 2706 (TLSFYCQYWL…CYGWDEPSAE (302 aa)) constitute an SHR-BD domain. Residues 2909–2933 (RGNNASNNNNNNGMTSSQMRQSGSG) form a disordered region. Low complexity predominate over residues 2911-2920 (NNASNNNNNN).

It belongs to the VPS13 family.

It is found in the membrane. Its function is as follows. Mediates the transfer of lipids between membranes at organelle contact sites. The sequence is that of Intermembrane lipid transfer protein vps13A (vps13A) from Dictyostelium discoideum (Social amoeba).